A 1177-amino-acid polypeptide reads, in one-letter code: Phospholipid-transporting ATPase IF (1177 aa).

Residues 1-55 lie on the Cytoplasmic side of the membrane; sequence MWRWIRQQLGFDPPHQSDTRTIYVANRFPQNGLYTPQKFIDNRIISSKYTVWNFV. Residues 56 to 77 form a helical membrane-spanning segment; sequence PKNLFEQFRRVANFYFLIIFLV. At 78-82 the chain is on the extracellular side; that stretch reads QLMID. Residues 83 to 104 form a helical membrane-spanning segment; it reads TPTSPVTSGLPLFFVITVTAIK. The Cytoplasmic portion of the chain corresponds to 105 to 289; that stretch reads QGYEDWLRHN…SAVEKSMNTF (185 aa). A helical transmembrane segment spans residues 290-311; sequence LIIYLVILISEAVISTILKYTW. The Extracellular portion of the chain corresponds to 312–341; sequence QAEEKWDEPWYNQKTEHQRNSSKILRFISD. A helical membrane pass occupies residues 342-359; the sequence is FLAFLVLYNFIIPISLYV. The Cytoplasmic portion of the chain corresponds to 360–876; sequence TVEMQKFLGS…HGHFYYIRIA (517 aa). Asp407 serves as the catalytic 4-aspartylphosphate intermediate. Positions 407, 408, 409, 531, 572, 595, 626, 706, 707, 708, 794, and 800 each coordinate ATP. Asp407 is a Mg(2+) binding site. A Mg(2+)-binding site is contributed by Thr409. Residue Asp821 participates in Mg(2+) binding. ATP contacts are provided by Asn824 and Asp825. Mg(2+) is bound at residue Asp825. A helical membrane pass occupies residues 877–898; the sequence is TLVQYFFYKNVCFITPQFLYQF. The Extracellular portion of the chain corresponds to 899–910; it reads YCLFSQQTLYDS. Residues 911 to 930 form a helical membrane-spanning segment; that stretch reads VYLTLYNICFTSLPILIYSL. The Cytoplasmic segment spans residues 931 to 960; the sequence is LEQHVDPHVLQNKPTLYRDISKNRLLSIKT. Residues 961–982 traverse the membrane as a helical segment; that stretch reads FLYWTILGFSHAFIFFFGSYLL. The Extracellular segment spans residues 983–997; it reads IGKDTSLLGNGQMFG. Residues 998-1020 form a helical membrane-spanning segment; the sequence is NWTFGTLVFTVMVITVTVKMALE. Residues 1021–1025 are Cytoplasmic-facing; it reads THFWT. Residues 1026–1047 form a helical membrane-spanning segment; sequence WINHLVTWGSIIFYFVFSLFYG. Topologically, residues 1048 to 1065 are extracellular; sequence GILWPFLGSQNMYFVFIQ. Residues 1066-1090 form a helical membrane-spanning segment; the sequence is LLSSGSAWFAIILMVVTCLFLDIIK. Topologically, residues 1091-1177 are cytoplasmic; that stretch reads KVFDRHLHPT…TLSTMDSSTC (87 aa). Position 1154 is a phosphoserine (Ser1154).

Belongs to the cation transport ATPase (P-type) (TC 3.A.3) family. Type IV subfamily. Component of a P4-ATPase flippase complex which consists of a catalytic alpha subunit ATP11B and an accessory beta subunit TMEM30A. Requires Mg(2+) as cofactor.

It localises to the recycling endosome membrane. The protein resides in the early endosome. It is found in the endoplasmic reticulum. Its subcellular location is the golgi apparatus. The protein localises to the trans-Golgi network. It carries out the reaction ATP + H2O + phospholipidSide 1 = ADP + phosphate + phospholipidSide 2.. The enzyme catalyses a 1,2-diacyl-sn-glycero-3-phospho-L-serine(out) + ATP + H2O = a 1,2-diacyl-sn-glycero-3-phospho-L-serine(in) + ADP + phosphate + H(+). It catalyses the reaction a 1,2-diacyl-sn-glycero-3-phosphoethanolamine(out) + ATP + H2O = a 1,2-diacyl-sn-glycero-3-phosphoethanolamine(in) + ADP + phosphate + H(+). Its activity is regulated as follows. The ATPase activity is up-regulated by aminophospholipids PS and PE. Catalytic component of a P4-ATPase flippase complex which catalyzes the hydrolysis of ATP coupled to the transport of aminophospholipids, phosphatidylserines (PS) and phosphatidylethanolamines (PE), from the outer to the inner leaflet of intracellular membranes. May contribute to the maintenance of membrane lipid asymmetry in endosome compartment. In Homo sapiens (Human), this protein is Phospholipid-transporting ATPase IF (ATP11B).